Reading from the N-terminus, the 84-residue chain is Small ribosomal subunit protein uS17 (84 aa).

The protein belongs to the universal ribosomal protein uS17 family. In terms of assembly, part of the 30S ribosomal subunit.

Functionally, one of the primary rRNA binding proteins, it binds specifically to the 5'-end of 16S ribosomal RNA. This is Small ribosomal subunit protein uS17 from Clostridium botulinum (strain Alaska E43 / Type E3).